The chain runs to 708 residues: Assimilatory nitrate reductase (708 aa).

One can recognise a 4Fe-4S Mo/W bis-MGD-type domain in the interval 15 to 73 (TKQVPTTCMRCAVGCGHVHLGSENAYGLETVRGDPSHPVNNGLACGRGIRESADPAGEW). [4Fe-4S] cluster is bound by residues C22, C25, C29, and C59. Residues 586-613 (TTGREADGYNTGVRSRSDTPEEPVARVN) form a disordered region.

The protein belongs to the prokaryotic molybdopterin-containing oxidoreductase family. NasA/NapA/NarB subfamily. Is probably a monomer. Initially characterized as a dimer of proteins with a MW of 105 and 50 kDa. Requires [4Fe-4S] cluster as cofactor. It depends on Mo-bis(molybdopterin guanine dinucleotide) as a cofactor.

It is found in the cytoplasm. It catalyses the reaction nitrite + 2 oxidized [2Fe-2S]-[ferredoxin] + H2O = nitrate + 2 reduced [2Fe-2S]-[ferredoxin] + 2 H(+). The protein operates within nitrogen metabolism; nitrate reduction (assimilation). Inhibited by cyanide and azide. Nitrate reductase is a key enzyme involved in the first step of nitrate assimilation. Catalyzes the reduction of nitrate to nitrite, using ferredoxin as the electron donor. Can use reduced methyl viologen but neither NADPH nor NADH as electron donors. This Haloferax mediterranei (strain ATCC 33500 / DSM 1411 / JCM 8866 / NBRC 14739 / NCIMB 2177 / R-4) (Halobacterium mediterranei) protein is Assimilatory nitrate reductase.